The chain runs to 328 residues: Malate dehydrogenase (328 aa).

Residue 11–17 (GAAGQIG) coordinates NAD(+). Residues Arg-94 and Arg-100 each contribute to the substrate site. NAD(+) contacts are provided by residues Asn-107, Gln-114, and 131–133 (VGN). Substrate is bound by residues Asn-133 and Arg-164. The active-site Proton acceptor is the His-189.

It belongs to the LDH/MDH superfamily. MDH type 2 family.

It carries out the reaction (S)-malate + NAD(+) = oxaloacetate + NADH + H(+). In terms of biological role, catalyzes the reversible oxidation of malate to oxaloacetate. This Xylella fastidiosa (strain Temecula1 / ATCC 700964) protein is Malate dehydrogenase.